Consider the following 357-residue polypeptide: Alanine racemase (357 aa).

Catalysis depends on Lys33, which acts as the Proton acceptor; specific for D-alanine. Position 33 is an N6-(pyridoxal phosphate)lysine (Lys33). A substrate-binding site is contributed by Arg129. Tyr253 acts as the Proton acceptor; specific for L-alanine in catalysis. A substrate-binding site is contributed by Met301.

Belongs to the alanine racemase family. As to quaternary structure, homodimer. It depends on pyridoxal 5'-phosphate as a cofactor.

It carries out the reaction L-alanine = D-alanine. It functions in the pathway amino-acid biosynthesis; D-alanine biosynthesis; D-alanine from L-alanine: step 1/1. In terms of biological role, catalyzes the interconversion of L-alanine and D-alanine. Is highly specific for alanine as substrate. May serve both anabolic and catabolic purposes. In Pseudomonas taetrolens, this protein is Alanine racemase.